Consider the following 422-residue polypeptide: Probable protease eep (422 aa).

His18 is a Zn(2+) binding site. Glu19 is an active-site residue. Position 22 (His22) interacts with Zn(2+). 3 consecutive transmembrane segments (helical) span residues 176-196, 349-369, and 394-414; these read FAGP…AVFL, VVFL…LPIP, and EGII…LVTW. Residues 179 to 273 form the PDZ domain; sequence PMNNFILGFI…EEQLTVTPEK (95 aa).

This sequence belongs to the peptidase M50B family. Zn(2+) is required as a cofactor.

The protein resides in the cell membrane. In terms of biological role, involved in production of the peptide pheromone cAD1. This is Probable protease eep (eep) from Enterococcus faecalis (strain ATCC 700802 / V583).